Reading from the N-terminus, the 828-residue chain is Putative alpha-1,3-mannosyltransferase MNN12 (828 aa).

Residues 1–13 lie on the Cytoplasmic side of the membrane; the sequence is MIEKLTIKRSRQK. The chain crosses the membrane as a helical span at residues 14-34; sequence VIAYSVIIIWLMIVNIWLLNN. At 35–828 the chain is on the lumenal side; the sequence is YHLNSSTLTR…YYGDVWVGME (794 aa). Asn-38 is a glycosylation site (N-linked (GlcNAc...) asparagine). Residues 80 to 104 are disordered; that stretch reads HQEEDVPNSQSTDNSLIKPTSPAKN. Polar residues predominate over residues 86 to 103; sequence PNSQSTDNSLIKPTSPAK. N-linked (GlcNAc...) asparagine glycans are attached at residues Asn-247, Asn-437, and Asn-591.

This sequence belongs to the MNN1/MNT family.

Its subcellular location is the golgi apparatus membrane. It functions in the pathway protein modification; protein glycosylation. In terms of biological role, responsible for addition of the terminal mannose residues to the outer chain of core N-linked polysaccharides and to O-linked mannotriose. Implicated in late Golgi modifications. The protein is Putative alpha-1,3-mannosyltransferase MNN12 (MNN12) of Candida albicans (strain SC5314 / ATCC MYA-2876) (Yeast).